The primary structure comprises 336 residues: Probable carboxylesterase 6 (336 aa).

The disordered stretch occupies residues 1–20 (MGGTKLTHVTTTNPNNSNIH). The segment covering 7 to 19 (THVTTTNPNNSNI) has biased composition (polar residues). An Involved in the stabilization of the negatively charged intermediate by the formation of the oxyanion hole motif is present at residues 96–98 (HGG). Residues serine 176, aspartate 276, and histidine 303 contribute to the active site.

It belongs to the 'GDXG' lipolytic enzyme family. As to expression, expressed in roots, leaves, flowers and siliques.

The enzyme catalyses a carboxylic ester + H2O = an alcohol + a carboxylate + H(+). Functionally, carboxylesterase acting on esters with varying acyl chain length. This is Probable carboxylesterase 6 (CXE6) from Arabidopsis thaliana (Mouse-ear cress).